We begin with the raw amino-acid sequence, 189 residues long: 3-isopropylmalate dehydratase small subunit (189 aa).

Belongs to the LeuD family. LeuD type 1 subfamily. As to quaternary structure, heterodimer of LeuC and LeuD.

The catalysed reaction is (2R,3S)-3-isopropylmalate = (2S)-2-isopropylmalate. The protein operates within amino-acid biosynthesis; L-leucine biosynthesis; L-leucine from 3-methyl-2-oxobutanoate: step 2/4. Catalyzes the isomerization between 2-isopropylmalate and 3-isopropylmalate, via the formation of 2-isopropylmaleate. In Francisella philomiragia subsp. philomiragia (strain ATCC 25017 / CCUG 19701 / FSC 153 / O#319-036), this protein is 3-isopropylmalate dehydratase small subunit.